The primary structure comprises 1130 residues: Tyrosine-protein kinase ABL1 (1130 aa).

Residues 1-60 (MLEICLKLVGCKSKKGLSSSSSCYLEEALQRPVASDFEPQGLSEAARWNSKENLLAGPSE) are CAP. A lipid anchor (N-myristoyl glycine) is attached at Leu2. Ser50 is subject to Phosphoserine. Residues 61-121 (NDPNLFVALY…PSNYITPVNS (61 aa)) form the SH3 domain. Phosphotyrosine; by autocatalysis is present on Tyr70. Tyr115, Tyr128, Tyr139, Tyr172, Tyr185, and Tyr215 each carry phosphotyrosine. The region spanning 127–217 (WYHGPVSRNA…GLITTLHYPA (91 aa)) is the SH2 domain. Tyr226 bears the Phosphotyrosine; by autocatalysis mark. Ser229 bears the Phosphoserine mark. One can recognise a Protein kinase domain in the interval 242–493 (ITMKHKLGGG…PSFAEIHQAF (252 aa)). 248 to 256 (LGGGQYGEV) provides a ligand contact to ATP. Residues Tyr253 and Tyr257 each carry the phosphotyrosine modification. ATP-binding positions include Lys271 and 316–322 (EFMTYGN). The Proton acceptor role is filled by Asp363. A Kinase activation loop motif is present at residues 381–405 (DFGLSRLMTGDTYTAHAGAKFPIKW). Tyr393 bears the Phosphotyrosine; by autocatalysis and SRC-type Tyr-kinases mark. Phosphotyrosine is present on Tyr413. Ser446, Ser559, and Ser569 each carry phosphoserine. The tract at residues 518–996 (AVSTLLQAPE…SASSALAGDQ (479 aa)) is disordered. The span at 537-566 (RAAEHRDTTDVPEMPHSKGQGESDPLDHEP) shows a compositional bias: basic and acidic residues. Residues 586–597 (EDERLLPKDKKT) are compositionally biased toward basic and acidic residues. A Nuclear localization signal 1 motif is present at residues 605 to 609 (KKKKK). Ser618 and Ser619 each carry phosphoserine; by PAK2. Ser620, Ser659, and Ser683 each carry phosphoserine. Residues 620 to 640 (SFREMDGQPERRGAGEEEGRD) show a composition bias toward basic and acidic residues. The segment covering 689-698 (KSSTLTSSRL) has biased composition (polar residues). Residues 709–715 (SSKRFLR) carry the Nuclear localization signal 2 motif. Lys711 is subject to N6-acetyllysine; by EP300. Ser718 bears the Phosphoserine mark. Phosphothreonine is present on residues Thr735 and Thr751. The segment covering 740 to 752 (LQSTGRQFDSSTF) has biased composition (polar residues). The segment covering 755–774 (HKSEKPALPRKRAGENRSDQ) has biased composition (basic and acidic residues). Positions 762-769 (LPRKRAGE) match the Nuclear localization signal 3 motif. At Thr781 the chain carries Phosphothreonine. The span at 788–802 (KKNEEAADEVFKDIM) shows a compositional bias: basic and acidic residues. 4 positions are modified to phosphothreonine: Thr814, Thr823, Thr844, and Thr852. At Ser855 the chain carries Phosphoserine. Residues 869 to 968 (PAEESRVRRH…VLPATPKPQS (100 aa)) form a DNA-binding region. Positions 881–891 (SSESPGRDKGK) are enriched in basic and acidic residues. Low complexity predominate over residues 905–915 (ASAGKAGGKPS). Residue Ser917 is modified to Phosphoserine. Positions 953–1130 (EGLKKPVLPA…VKEISDIVQR (178 aa)) are F-actin-binding. A compositionally biased stretch (polar residues) spans 965 to 975 (KPQSAKPSGTP). Residue Ser977 is modified to Phosphoserine. Positions 984–993 (TLPSASSALA) are enriched in low complexity. The Nuclear export signal signature appears at 1090-1100 (LENNLRELQIC).

Belongs to the protein kinase superfamily. Tyr protein kinase family. ABL subfamily. Interacts with SORBS1 following insulin stimulation. Found in a trimolecular complex containing CDK5 and CABLES1. Interacts with CABLES1 and PSTPIP1. Interacts with ZDHHC16, ITGB1 and HCK. Interacts with STX17; probably phosphorylates STX17. Interacts with INPPL1/SHIP2. Interacts with the 14-3-3 proteins, YWHAB, YWHAE, YWHAG, YWHAH, SFN and YWHAZ; the interaction with 14-3-3 proteins requires phosphorylation on Thr-735 and, sequesters ABL1 into the cytoplasm. Interacts with ABI1, ABI2, BCR, CRK, FGR, FYN, HCK, LYN, PSMA7 RAD9A, RAD51, RAD52, TP73 and WASF3. A complex made of ABL1, CTTN and MYLK regulates cortical actin-based cytoskeletal rearrangement critical to sphingosine 1-phosphate (S1P)-mediated endothelial cell (EC) barrier enhancement. Interacts (via SH3 domain) with CASP9; the interaction is direct and increases in the response of cells to genotoxic stress and ABL1/c-Abl activation. Found in a complex with ABL1, ABL2, CRK and UNC119; leading to the inhibition of CRK phosphorylation by ABL kinases. Interacts with TBX21. Interacts with NEDD9/HEF1; interaction is induced by CXCL12 promotion of ABL-mediated phosphorylation of NEDD9/HEF1. Requires Mg(2+) as cofactor. Post-translationally, acetylated at Lys-711 by EP300 which promotes the cytoplasmic translocation. In terms of processing, phosphorylation at Tyr-70 by members of the SRC family of kinases disrupts SH3 domain-based autoinhibitory interactions and intermolecular associations, such as that with ABI1, and also enhances kinase activity. Phosphorylation at Tyr-226 and Tyr-393 correlate with increased activity. DNA damage-induced activation of ABL1 requires the function of ATM and Ser-446 phosphorylation. Phosphorylation at Ser-569 has been attributed to a CDC2-associated kinase and is coupled to cell division. Phosphorylation at Ser-618 and Ser-619 by PAK2 increases binding to CRK and reduces binding to ABI1. Phosphorylation on Thr-735 is required for binding 14-3-3 proteins for cytoplasmic translocation. Phosphorylated by PRKDC. Polyubiquitinated. Polyubiquitination of ABL1 leads to degradation. Widely expressed.

Its subcellular location is the cytoplasm. It localises to the cytoskeleton. It is found in the nucleus. The protein localises to the mitochondrion. The protein resides in the nucleus membrane. The enzyme catalyses L-tyrosyl-[protein] + ATP = O-phospho-L-tyrosyl-[protein] + ADP + H(+). Its activity is regulated as follows. Stabilized in the inactive form by an association between the SH3 domain and the SH2-TK linker region, interactions of the N-terminal cap, and contributions from an N-terminal myristoyl group and phospholipids. Activated by autophosphorylation as well as by SRC-family kinase-mediated phosphorylation. Activated by RIN1 binding to the SH2 and SH3 domains. Also stimulated by cell death inducers and DNA-damage. Phosphatidylinositol 4,5-bisphosphate (PIP2), a highly abundant phosphoinositide known to regulate cytoskeletal and membrane proteins, also inhibits the tyrosine kinase activity. Activated by 5-(1,3-diaryl-1H-pyrazol-4-yl)hydantoin, 5-[3-(4-fluorophenyl)-1-phenyl-1H-pyrazol-4-yl]-2,4-imidazolidinedione (DPH). Inhibited by ABI1, whose activity is controlled by ABL1 itself through tyrosine phosphorylation. Also inhibited by imatinib mesylate (Gleevec) which is used for the treatment of chronic myeloid leukemia (CML), and by VX-680, an inhibitor that also acts on imatinib-resistant mutants. Non-receptor tyrosine-protein kinase that plays a role in many key processes linked to cell growth and survival such as cytoskeleton remodeling in response to extracellular stimuli, cell motility and adhesion, receptor endocytosis, autophagy, DNA damage response and apoptosis. Coordinates actin remodeling through tyrosine phosphorylation of proteins controlling cytoskeleton dynamics like WASF3 (involved in branch formation); ANXA1 (involved in membrane anchoring); DBN1, DBNL, CTTN, RAPH1 and ENAH (involved in signaling); or MAPT and PXN (microtubule-binding proteins). Phosphorylation of WASF3 is critical for the stimulation of lamellipodia formation and cell migration. Involved in the regulation of cell adhesion and motility through phosphorylation of key regulators of these processes such as BCAR1, CRK, CRKL, DOK1, EFS or NEDD9. Phosphorylates multiple receptor tyrosine kinases and more particularly promotes endocytosis of EGFR, facilitates the formation of neuromuscular synapses through MUSK, inhibits PDGFRB-mediated chemotaxis and modulates the endocytosis of activated B-cell receptor complexes. Other substrates which are involved in endocytosis regulation are the caveolin (CAV1) and RIN1. Moreover, ABL1 regulates the CBL family of ubiquitin ligases that drive receptor down-regulation and actin remodeling. Phosphorylation of CBL leads to increased EGFR stability. Involved in late-stage autophagy by regulating positively the trafficking and function of lysosomal components. ABL1 targets to mitochondria in response to oxidative stress and thereby mediates mitochondrial dysfunction and cell death. In response to oxidative stress, phosphorylates serine/threonine kinase PRKD2 at 'Tyr-717'. ABL1 is also translocated in the nucleus where it has DNA-binding activity and is involved in DNA-damage response and apoptosis. Many substrates are known mediators of DNA repair: DDB1, DDB2, ERCC3, ERCC6, RAD9A, RAD51, RAD52 or WRN. Activates the proapoptotic pathway when the DNA damage is too severe to be repaired. Phosphorylates TP73, a primary regulator for this type of damage-induced apoptosis. Phosphorylates the caspase CASP9 on 'Tyr-153' and regulates its processing in the apoptotic response to DNA damage. Phosphorylates PSMA7 that leads to an inhibition of proteasomal activity and cell cycle transition blocks. ABL1 also acts as a regulator of multiple pathological signaling cascades during infection. Several known tyrosine-phosphorylated microbial proteins have been identified as ABL1 substrates. This is the case of A36R of Vaccinia virus, Tir (translocated intimin receptor) of pathogenic E.coli and possibly Citrobacter, CagA (cytotoxin-associated gene A) of H.pylori, or AnkA (ankyrin repeat-containing protein A) of A.phagocytophilum. Pathogens can highjack ABL1 kinase signaling to reorganize the host actin cytoskeleton for multiple purposes, like facilitating intracellular movement and host cell exit. Finally, functions as its own regulator through autocatalytic activity as well as through phosphorylation of its inhibitor, ABI1. Regulates T-cell differentiation in a TBX21-dependent manner. Positively regulates chemokine-mediated T-cell migration, polarization, and homing to lymph nodes and immune-challenged tissues, potentially via activation of NEDD9/HEF1 and RAP1. Phosphorylates TBX21 on tyrosine residues leading to an enhancement of its transcriptional activator activity. The chain is Tyrosine-protein kinase ABL1 (ABL1) from Homo sapiens (Human).